The sequence spans 246 residues: Heavy metal-associated isoprenylated plant protein 8 (246 aa).

The disordered stretch occupies residues 1-31 (MGKNKQNGESDNKSEKKNQKNGDSSVDKSDK). One can recognise an HMA 1 domain in the interval 35 to 99 (CKEIVLKVYM…RVQKKFSRNA (65 aa)). Residues Cys46 and Cys49 each coordinate a metal cation. A disordered region spans residues 96-122 (SRNAEMISPKHNPKQDQKEPQQKKESA). Over residues 108–122 (PKQDQKEPQQKKESA) the composition is skewed to basic and acidic residues. The HMA 2 domain occupies 125–189 (IKTAILRMNM…IKKKLGKHAE (65 aa)). A metal cation contacts are provided by Cys136 and Cys139. Positions 191–226 (LSQITEKGKDNNKKNNNKKEESDGNKIFSYPPQYSS) are disordered. The span at 196–214 (EKGKDNNKKNNNKKEESDG) shows a compositional bias: basic and acidic residues. Cys243 is subject to Cysteine methyl ester. Cys243 is lipidated: S-farnesyl cysteine. The propeptide at 244-246 (SIM) is removed in mature form.

The protein belongs to the HIPP family.

Heavy-metal-binding protein. In Arabidopsis thaliana (Mouse-ear cress), this protein is Heavy metal-associated isoprenylated plant protein 8.